A 333-amino-acid polypeptide reads, in one-letter code: Mitochondrial glycine transporter (333 aa).

Positions 1 to 25 are disordered; sequence MTNAATDKSVASVARDVSTGKPGKS. Solcar repeat units follow at residues 26 to 109, 127 to 220, and 236 to 319; these read PDAA…MRAA, LLPM…FKND, and RSSV…LIKS. 6 helical membrane passes run 32–57, 84–110, 133–158, 195–218, 240–266, and 294–312; these read LLSG…TRLQ, GAVP…RAAV, LATG…TRFE, GSVA…EGFK, INSS…KTRL, and GLSL…SWCI.

It belongs to the mitochondrial carrier (TC 2.A.29) family. SLC25A38 subfamily.

The protein resides in the mitochondrion inner membrane. It carries out the reaction glycine(in) = glycine(out). In terms of biological role, mitochondrial glycine transporter that imports glycine into the mitochondrial matrix. Plays an important role in providing glycine for the first enzymatic step in heme biosynthesis, the condensation of glycine with succinyl-CoA to produce 5-aminolevulinate (ALA) in the mitochondrial matrix. This chain is Mitochondrial glycine transporter, found in Scheffersomyces stipitis (strain ATCC 58785 / CBS 6054 / NBRC 10063 / NRRL Y-11545) (Yeast).